The primary structure comprises 92 residues: Exodeoxyribonuclease 7 small subunit (92 aa).

Residues 71 to 84 (AESAGTAKSAVAAD) show a composition bias toward low complexity. The disordered stretch occupies residues 71–92 (AESAGTAKSAVAADSRGAADSA).

Belongs to the XseB family. Heterooligomer composed of large and small subunits.

The protein localises to the cytoplasm. It carries out the reaction Exonucleolytic cleavage in either 5'- to 3'- or 3'- to 5'-direction to yield nucleoside 5'-phosphates.. Its function is as follows. Bidirectionally degrades single-stranded DNA into large acid-insoluble oligonucleotides, which are then degraded further into small acid-soluble oligonucleotides. The sequence is that of Exodeoxyribonuclease 7 small subunit from Leifsonia xyli subsp. xyli (strain CTCB07).